The chain runs to 124 residues: Large ribosomal subunit protein uL22 (124 aa).

It belongs to the universal ribosomal protein uL22 family. Part of the 50S ribosomal subunit.

This protein binds specifically to 23S rRNA; its binding is stimulated by other ribosomal proteins, e.g. L4, L17, and L20. It is important during the early stages of 50S assembly. It makes multiple contacts with different domains of the 23S rRNA in the assembled 50S subunit and ribosome. In terms of biological role, the globular domain of the protein is located near the polypeptide exit tunnel on the outside of the subunit, while an extended beta-hairpin is found that lines the wall of the exit tunnel in the center of the 70S ribosome. The sequence is that of Large ribosomal subunit protein uL22 from Synechococcus sp. (strain JA-2-3B'a(2-13)) (Cyanobacteria bacterium Yellowstone B-Prime).